The sequence spans 459 residues: Phosphomethylpyrimidine synthase (459 aa).

Substrate-binding positions include Asn80, Met109, Tyr139, His175, 195–197 (SRG), 236–239 (DSLR), and Glu275. His279 provides a ligand contact to Zn(2+). Tyr302 contacts substrate. Zn(2+) is bound at residue His343. 3 residues coordinate [4Fe-4S] cluster: Cys423, Cys426, and Cys431.

Belongs to the ThiC family. [4Fe-4S] cluster is required as a cofactor.

The catalysed reaction is 5-amino-1-(5-phospho-beta-D-ribosyl)imidazole + S-adenosyl-L-methionine = 4-amino-2-methyl-5-(phosphooxymethyl)pyrimidine + CO + 5'-deoxyadenosine + formate + L-methionine + 3 H(+). Its pathway is cofactor biosynthesis; thiamine diphosphate biosynthesis. Its function is as follows. Catalyzes the synthesis of the hydroxymethylpyrimidine phosphate (HMP-P) moiety of thiamine from aminoimidazole ribotide (AIR) in a radical S-adenosyl-L-methionine (SAM)-dependent reaction. In Gloeothece citriformis (strain PCC 7424) (Cyanothece sp. (strain PCC 7424)), this protein is Phosphomethylpyrimidine synthase.